Consider the following 104-residue polypeptide: Large ribosomal subunit protein uL24 (104 aa).

Belongs to the universal ribosomal protein uL24 family. As to quaternary structure, part of the 50S ribosomal subunit.

Its function is as follows. One of two assembly initiator proteins, it binds directly to the 5'-end of the 23S rRNA, where it nucleates assembly of the 50S subunit. Functionally, one of the proteins that surrounds the polypeptide exit tunnel on the outside of the subunit. The sequence is that of Large ribosomal subunit protein uL24 from Aliivibrio fischeri (strain ATCC 700601 / ES114) (Vibrio fischeri).